A 244-amino-acid chain; its full sequence is Agamous-like MADS-box protein MADS3 (244 aa).

The 61-residue stretch at 1–61 folds into the MADS-box domain; it reads MGRGRVELKR…GKLYEFGSAG (61 aa). The 91-residue stretch at 85–175 folds into the K-box domain; sequence TQSWYQEVSK…KLKLEAEGQS (91 aa). Residues 180–206 are disordered; the sequence is QGSWNPSTATAGNSSFPVHPSQSNPMD. Over residues 181-204 the composition is skewed to polar residues; it reads GSWNPSTATAGNSSFPVHPSQSNP.

In terms of tissue distribution, expressed in flowers and seeds.

The protein resides in the nucleus. Functionally, probable transcription factor involved in flower development. This is Agamous-like MADS-box protein MADS3 from Vitis vinifera (Grape).